The chain runs to 117 residues: Small ribosomal subunit protein uS8c (117 aa).

The protein belongs to the universal ribosomal protein uS8 family. In terms of assembly, part of the 30S ribosomal subunit.

Its subcellular location is the plastid. It is found in the chloroplast. In terms of biological role, one of the primary rRNA binding proteins, it binds directly to 16S rRNA central domain where it helps coordinate assembly of the platform of the 30S subunit. In Cyanidioschyzon merolae (strain NIES-3377 / 10D) (Unicellular red alga), this protein is Small ribosomal subunit protein uS8c (rps8).